A 159-amino-acid chain; its full sequence is NADH-quinone oxidoreductase subunit B (159 aa).

[4Fe-4S] cluster contacts are provided by cysteine 36, cysteine 37, cysteine 102, and cysteine 132.

This sequence belongs to the complex I 20 kDa subunit family. NDH-1 is composed of 14 different subunits. Subunits NuoB, C, D, E, F, and G constitute the peripheral sector of the complex. [4Fe-4S] cluster is required as a cofactor.

It is found in the cell inner membrane. The enzyme catalyses a quinone + NADH + 5 H(+)(in) = a quinol + NAD(+) + 4 H(+)(out). NDH-1 shuttles electrons from NADH, via FMN and iron-sulfur (Fe-S) centers, to quinones in the respiratory chain. The immediate electron acceptor for the enzyme in this species is believed to be ubiquinone. Couples the redox reaction to proton translocation (for every two electrons transferred, four hydrogen ions are translocated across the cytoplasmic membrane), and thus conserves the redox energy in a proton gradient. The protein is NADH-quinone oxidoreductase subunit B of Acidovorax ebreus (strain TPSY) (Diaphorobacter sp. (strain TPSY)).